The chain runs to 294 residues: Thymidylate synthase 1/2 (294 aa).

Residues Arg29 and 154–155 each bind dUMP; that span reads RR. Cys174 (nucleophile) is an active-site residue. Residues 194–197, Asn205, and 235–237 each bind dUMP; these read RSGD and HVY. Asp197 is a binding site for (6R)-5,10-methylene-5,6,7,8-tetrahydrofolate.

Belongs to the thymidylate synthase family.

It catalyses the reaction dUMP + (6R)-5,10-methylene-5,6,7,8-tetrahydrofolate = 7,8-dihydrofolate + dTMP. The protein operates within pyrimidine metabolism; dTTP biosynthesis. The chain is Thymidylate synthase 1/2 (TS-1) from Encephalitozoon cuniculi (strain GB-M1) (Microsporidian parasite).